The primary structure comprises 198 residues: Large ribosomal subunit protein uL23c (198 aa).

The N-terminal 76 residues, 1–76, are a transit peptide targeting the chloroplast; sequence MATTAPNLHS…SFGRDLMVAQ (76 aa).

This sequence belongs to the universal ribosomal protein uL23 family. In terms of assembly, component of the chloroplast large ribosomal subunit (LSU). Mature 70S chloroplast ribosomes of higher plants consist of a small (30S) and a large (50S) subunit. The 30S small subunit contains 1 molecule of ribosomal RNA (16S rRNA) and 24 different proteins. The 50S large subunit contains 3 rRNA molecules (23S, 5S and 4.5S rRNA) and 33 different proteins.

The protein localises to the plastid. It localises to the chloroplast. Its function is as follows. Component of the chloroplast ribosome (chloro-ribosome), a dedicated translation machinery responsible for the synthesis of chloroplast genome-encoded proteins, including proteins of the transcription and translation machinery and components of the photosynthetic apparatus. This is Large ribosomal subunit protein uL23c (RPL23) from Spinacia oleracea (Spinach).